The chain runs to 349 residues: 5-deoxyribose 1-phosphate isomerase (349 aa).

Substrate is bound by residues 49-51, arginine 92, and glutamine 199; that span reads RGA. Catalysis depends on aspartate 240, which acts as the Proton donor. 250 to 251 contributes to the substrate binding site; sequence NK.

Belongs to the EIF-2B alpha/beta/delta subunits family. DrdI subfamily.

The enzyme catalyses 5-deoxy-alpha-D-ribose 1-phosphate = 5-deoxy-D-ribulose 1-phosphate. It functions in the pathway carbohydrate degradation. Functionally, catalyzes the isomerization of 5-deoxy-alpha-D-ribose 1-phosphate to 5-deoxy-D-ribulose 1-phosphate, as part of a 5-deoxyribose salvage pathway that recycles this toxic radical SAM enzyme by-product to mainstream metabolites. This is 5-deoxyribose 1-phosphate isomerase from Clostridium botulinum (strain Loch Maree / Type A3).